Consider the following 290-residue polypeptide: Zinc finger AN1 and C2H2 domain-containing stress-associated protein 16 (290 aa).

2 AN1-type zinc fingers span residues 7–55 and 95–145; these read PNLG…QKDV and VTKK…KPES. 16 residues coordinate Zn(2+): Cys-13, Cys-18, Cys-28, Cys-31, Cys-36, His-39, His-45, Cys-47, Cys-101, Cys-106, Cys-118, Cys-121, Cys-126, His-129, His-135, and Cys-137. 2 consecutive C2H2-type zinc fingers follow at residues 224-247 and 261-284; these read EQCV…EKSH and DVCP…ERDH.

In terms of biological role, may be involved in environmental stress response. The protein is Zinc finger AN1 and C2H2 domain-containing stress-associated protein 16 (SAP16) of Oryza sativa subsp. japonica (Rice).